Consider the following 177-residue polypeptide: Protein FATTY ACID EXPORT 4, chloroplastic (177 aa).

A chloroplast-targeting transit peptide spans 1–63; it reads MWSLALTLPS…AELSELAPVV (63 aa). The next 3 helical transmembrane spans lie at 85–105, 111–131, and 140–160; these read KGSL…YFLT, RVLG…VFGF, and VPAG…VMAY.

This sequence belongs to the TMEM14 family.

It is found in the plastid. It localises to the chloroplast membrane. Its function is as follows. May be involved in free fatty acids export from the plastids. The sequence is that of Protein FATTY ACID EXPORT 4, chloroplastic from Arabidopsis thaliana (Mouse-ear cress).